The chain runs to 476 residues: Probable isoprenylcysteine alpha-carbonyl methylesterase ICMEL1 (476 aa).

A compositionally biased stretch (polar residues) spans 92–104 (NCLSAFSDDTNGT). A disordered region spans residues 92–116 (NCLSAFSDDTNGTADGGNNSGDRQT). 2 helical membrane-spanning segments follow: residues 153–173 (FMAL…VGYY) and 208–228 (VVAF…GSLL). Substrate contacts are provided by residues 214–216 (GGA) and 285–287 (QSA). Residues Ser286, Asp388, and His420 contribute to the active site.

Belongs to the AB hydrolase superfamily. Isoprenylcysteine methylesterase family. Expressed in roots, rosette and cauline leaves, stems, flowers and siliques.

It is found in the endoplasmic reticulum membrane. It localises to the golgi apparatus membrane. The enzyme catalyses [protein]-C-terminal S-[(2E,6E)-farnesyl]-L-cysteine methyl ester + H2O = [protein]-C-terminal S-[(2E,6E)-farnesyl]-L-cysteine + methanol + H(+). In terms of biological role, catalyzes the demethylation of isoprenylcysteine methylesters. May be involved in the regulation of ABA signaling. The polypeptide is Probable isoprenylcysteine alpha-carbonyl methylesterase ICMEL1 (Arabidopsis thaliana (Mouse-ear cress)).